A 184-amino-acid chain; its full sequence is GTP cyclohydrolase 1 (184 aa).

Residues Cys75, His78, and Cys146 each coordinate Zn(2+).

It belongs to the GTP cyclohydrolase I family. Toroid-shaped homodecamer, composed of two pentamers of five dimers.

It carries out the reaction GTP + H2O = 7,8-dihydroneopterin 3'-triphosphate + formate + H(+). Its pathway is cofactor biosynthesis; 7,8-dihydroneopterin triphosphate biosynthesis; 7,8-dihydroneopterin triphosphate from GTP: step 1/1. In Pseudoalteromonas translucida (strain TAC 125), this protein is GTP cyclohydrolase 1.